We begin with the raw amino-acid sequence, 346 residues long: fMet-Leu-Phe receptor (346 aa).

Residues N1 and N7 are each glycosylated (N-linked (GlcNAc...) asparagine). The Extracellular portion of the chain corresponds to 1 to 24 (NSSLPTNISGGTPAVSAGYLFLDI). The chain crosses the membrane as a helical span at residues 25-47 (VTYLVFAVTFVLGVLGNGLVIWV). Residues 48–58 (AGFRMTHTVTT) lie on the Cytoplasmic side of the membrane. The helical transmembrane segment at 59 to 80 (ISYLNLAVADFCFTSTLPFFMV) threads the bilayer. Over 81 to 97 (KKAMGGHWPFGWFLCKF) the chain is Extracellular. An intrachain disulfide couples C95 to C173. A helical transmembrane segment spans residues 98–118 (IFTIVDINLFGSVFLIALIAL). The Cytoplasmic portion of the chain corresponds to 119 to 137 (DRCVCVLHPVWTQNHRTVS). The helical transmembrane segment at 138-159 (LAKKVIIGPWVMALLLTLPVII) threads the bilayer. The Extracellular segment spans residues 160–202 (RVTTVPGKMGTVACTFNFSPWTNDPKERIKVAVAMLTVRGIIR). Residues 203–223 (FIIGFSAPMSIVAVSYGLIAT) traverse the membrane as a helical segment. The Cytoplasmic portion of the chain corresponds to 224–239 (KIDKQGLIKSSRTLRV). The chain crosses the membrane as a helical span at residues 240 to 263 (LSFVAAAFFLSWSPYQVVALIATV). Topologically, residues 264-282 (RIRELLQGMYKEIGIAVDV) are extracellular. A helical membrane pass occupies residues 283-302 (TSALAFFNSCLNPMLYVFMG). Over 303 to 346 (QDFRERLIHALPASLERALTEDSTQTSDTATNSTLPSAEVALQA) the chain is Cytoplasmic. The interval 322–346 (TEDSTQTSDTATNSTLPSAEVALQA) is disordered. A compositionally biased stretch (polar residues) spans 323 to 338 (EDSTQTSDTATNSTLP).

It belongs to the G-protein coupled receptor 1 family. Phosphorylated; which is necessary for desensitization.

The protein resides in the cell membrane. Functionally, high affinity receptor for N-formyl-methionyl peptides (fMLP), which are powerful neutrophil chemotactic factors. Binding of fMLP to the receptor stimulates intracellular calcium mobilization and superoxide anion release. This response is mediated via a G-protein that activates a phosphatidylinositol-calcium second messenger system. Receptor for TAFA4, mediates its effects on chemoattracting macrophages, promoting phagocytosis and increasing ROS release. Receptor for cathepsin CTSG, leading to increased phagocyte chemotaxis. The protein is fMet-Leu-Phe receptor (FPR1) of Gorilla gorilla gorilla (Western lowland gorilla).